The sequence spans 439 residues: Glutamyl-tRNA(Gln) amidotransferase subunit D (439 aa).

Residues 88–419 enclose the Asparaginase/glutaminase domain; sequence GKVKIISTGG…EEVKRIMLTN (332 aa). Residues Thr-98, Thr-174, Asp-175, and Lys-253 contribute to the active site.

The protein belongs to the asparaginase 1 family. GatD subfamily. As to quaternary structure, heterodimer of GatD and GatE.

It carries out the reaction L-glutamyl-tRNA(Gln) + L-glutamine + ATP + H2O = L-glutaminyl-tRNA(Gln) + L-glutamate + ADP + phosphate + H(+). Functionally, allows the formation of correctly charged Gln-tRNA(Gln) through the transamidation of misacylated Glu-tRNA(Gln) in organisms which lack glutaminyl-tRNA synthetase. The reaction takes place in the presence of glutamine and ATP through an activated gamma-phospho-Glu-tRNA(Gln). The GatDE system is specific for glutamate and does not act on aspartate. The protein is Glutamyl-tRNA(Gln) amidotransferase subunit D of Metallosphaera sedula (strain ATCC 51363 / DSM 5348 / JCM 9185 / NBRC 15509 / TH2).